An 856-amino-acid polypeptide reads, in one-letter code: DNA mismatch repair protein MutS (856 aa).

An ATP-binding site is contributed by glycine 607 to serine 614.

This sequence belongs to the DNA mismatch repair MutS family.

Its function is as follows. This protein is involved in the repair of mismatches in DNA. It is possible that it carries out the mismatch recognition step. This protein has a weak ATPase activity. The sequence is that of DNA mismatch repair protein MutS from Cytophaga hutchinsonii (strain ATCC 33406 / DSM 1761 / CIP 103989 / NBRC 15051 / NCIMB 9469 / D465).